The chain runs to 470 residues: Ribosomal protein uS12 methylthiotransferase RimO (470 aa).

Positions 1–27 are disordered; it reads MPCQAPHSDSNVKNPSEATNQKDHSPR. The span at 7-19 shows a compositional bias: polar residues; the sequence is HSDSNVKNPSEAT. The 116-residue stretch at 26–141 folds into the MTTase N-terminal domain; sequence PRVGFVSLGC…VMQAVHTHLP (116 aa). C35, C71, C100, C172, C176, and C179 together coordinate [4Fe-4S] cluster. Residues 158 to 399 enclose the Radical SAM core domain; sequence LTPKHYAYLK…MEVAEAVSAR (242 aa). Residues 402–470 form the TRAM domain; it reads QRKVGQTLRV…ADGHDLWGEV (69 aa).

Belongs to the methylthiotransferase family. RimO subfamily. [4Fe-4S] cluster serves as cofactor.

The protein localises to the cytoplasm. It catalyses the reaction L-aspartate(89)-[ribosomal protein uS12]-hydrogen + (sulfur carrier)-SH + AH2 + 2 S-adenosyl-L-methionine = 3-methylsulfanyl-L-aspartate(89)-[ribosomal protein uS12]-hydrogen + (sulfur carrier)-H + 5'-deoxyadenosine + L-methionine + A + S-adenosyl-L-homocysteine + 2 H(+). Functionally, catalyzes the methylthiolation of an aspartic acid residue of ribosomal protein uS12. This is Ribosomal protein uS12 methylthiotransferase RimO from Cupriavidus taiwanensis (strain DSM 17343 / BCRC 17206 / CCUG 44338 / CIP 107171 / LMG 19424 / R1) (Ralstonia taiwanensis (strain LMG 19424)).